The sequence spans 103 residues: Large ribosomal subunit protein bL21 (103 aa).

Belongs to the bacterial ribosomal protein bL21 family. Part of the 50S ribosomal subunit. Contacts protein L20.

This protein binds to 23S rRNA in the presence of protein L20. The chain is Large ribosomal subunit protein bL21 from Photobacterium profundum (strain SS9).